The following is a 443-amino-acid chain: Structure-specific endonuclease subunit SLX1 (443 aa).

The 81-residue stretch at Arg-13–Arg-93 folds into the GIY-YIG domain. The disordered stretch occupies residues Phe-121 to Asn-140. An SLX1-type zinc finger spans residues Cys-361–Cys-419.

The protein belongs to the SLX1 family. Forms a heterodimer with SLX4. Requires a divalent metal cation as cofactor.

It localises to the nucleus. In terms of biological role, catalytic subunit of the SLX1-SLX4 structure-specific endonuclease that resolves DNA secondary structures generated during DNA repair and recombination. Has endonuclease activity towards branched DNA substrates, introducing single-strand cuts in duplex DNA close to junctions with ss-DNA. This chain is Structure-specific endonuclease subunit SLX1, found in Malassezia globosa (strain ATCC MYA-4612 / CBS 7966) (Dandruff-associated fungus).